Consider the following 465-residue polypeptide: Argininosuccinate lyase (465 aa).

This sequence belongs to the lyase 1 family. Argininosuccinate lyase subfamily.

Its subcellular location is the cytoplasm. It catalyses the reaction 2-(N(omega)-L-arginino)succinate = fumarate + L-arginine. It participates in amino-acid biosynthesis; L-arginine biosynthesis; L-arginine from L-ornithine and carbamoyl phosphate: step 3/3. The protein is Argininosuccinate lyase of Rhodopseudomonas palustris (strain HaA2).